Here is a 311-residue protein sequence, read N- to C-terminus: Forkhead box protein R2 (311 aa).

Disordered stretches follow at residues 56–76 (PPEMPQKRRPSPDGDGPPCEP) and 90–171 (LGSQ…QSPE). Basic and acidic residues predominate over residues 115–128 (QKDEGSNCSEDKVV). Residues 129–143 (ESLPSSSSEQSPLQK) show a composition bias toward low complexity. The segment covering 153 to 164 (ELTEEEAEEPDD) has biased composition (acidic residues). Residues 192 to 294 (RPPLNCSHLI…RVLAFAQRER (103 aa)) constitute a DNA-binding region (fork-head).

Expressed in breast cancer cell lines and primary cancer.

It is found in the nucleus. This chain is Forkhead box protein R2 (FOXR2), found in Homo sapiens (Human).